The sequence spans 1118 residues: MPAVASVPKELYLSSSLKDLNKKTEVKPEKISTKSYVHSALKIFKTAEECRLDRDEERAYVLYMKYVTVYNLIKKRPDFKQQQDYFHSILGPGNIKKAVEEAERLSESLKLRYEEAEVRKKLEEKDRQEEAQRLQQKRQETGREDGGTLAKGSLENVLDSKDKTQKSNGEKNEKCETKEKGAITAKELYTMMTDKNISLIIMDARRMQDYQDSCILHSLSVPEEAISPGVTASWIEAHLPDDSKDTWKKRGNVEYVVLLDWFSSAKDLQIGTTLRSLKDALFKWESKTVLRNEPLVLEGGYENWLLCYPQYTTNAKVTPPPRRQNEEVSISLDFTYPSLEESIPSKPAAQTPPASIEVDENIELISGQNERMGPLNISTPVEPVAASKSDVSPIIQPVPSIKNVPQIDRTKKPAVKLPEEHRIKSESTNHEQQSPQSGKVIPDRSTKPVVFSPTLMLTDEEKARIHAETALLMEKNKQEKELRERQQEEQKEKLRKEEQEQKAKKKQEAEENEITEKQQKAKEEMEKKESEQAKKEDKETSAKRGKEITGVKRQSKSEHETSDAKKSVEDRGKRCPTPEIQKKSTGDVPHTSVTGDSGSGKPFKIKGQPESGILRTGTFREDTDDTERNKAQREPLTRARSEEMGRIVPGLPSGWAKFLDPITGTFRYYHSPTNTVHMYPPEMAPSSAPPSTPPTHKAKPQIPAERDREPSKLKRSYSSPDITQAIQEEEKRKPTVTPTVNRENKPTCYPKAEISRLSASQIRNLNPVFGGSGPALTGLRNLGNTCYMNSILQCLCNAPHLADYFNRNCYQDDINRSNLLGHKGEVAEEFGIIMKALWTGQYRYISPKDFKITIGKINDQFAGYSQQDSQELLLFLMDGLHEDLNKADNRKRYKEENNDHLDDFKAAEHAWQKHKQLNESIIVALFQGQFKSTVQCLTCHKKSRTFEAFMYLSLPLASTSKCTLQDCLRLFSKEEKLTDNNRFYCSHCRARRDSLKKIEIWKLPPVLLVHLKRFSYDGRWKQKLQTSVDFPLENLDLSQYVIGPKNNLKKYNLFSVSNHYGGLDGGHYTAYCKNAARQRWFKFDDHEVSDISVSSVKSSAAYILFYTSLGPRVTDVAT.

The 84-residue stretch at 33-116 (TKSYVHSALK…ESLKLRYEEA (84 aa)) folds into the MIT domain. Basic and acidic residues-rich tracts occupy residues 120-146 (KKLE…REDG) and 158-177 (LDSK…KCET). The interval 120–177 (KKLEEKDRQEEAQRLQQKRQETGREDGGTLAKGSLENVLDSKDKTQKSNGEKNEKCET) is disordered. At Ser160 the chain carries Phosphoserine. A Rhodanese domain is found at 195–313 (KNISLIIMDA…WLLCYPQYTT (119 aa)). Phosphoserine occurs at positions 392 and 400. The tract at residues 402-447 (KNVPQIDRTKKPAVKLPEEHRIKSESTNHEQQSPQSGKVIPDRSTK) is disordered. Positions 405–413 (PQIDRTKKP) match the SH3-binding motif. A compositionally biased stretch (basic and acidic residues) spans 417 to 429 (LPEEHRIKSESTN). The residue at position 452 (Ser452) is a Phosphoserine. Residues 475–573 (KNKQEKELRE…AKKSVEDRGK (99 aa)) are compositionally biased toward basic and acidic residues. Disordered regions lie at residues 475–648 (KNKQ…GRIV) and 679–746 (YPPE…ENKP). Thr577 is modified (phosphothreonine). The segment covering 618 to 645 (TFREDTDDTERNKAQREPLTRARSEEMG) has biased composition (basic and acidic residues). Over residues 716–726 (SYSSPDITQAI) the composition is skewed to polar residues. Ser718 and Ser719 each carry phosphoserine. The 333-residue stretch at 777 to 1109 (TGLRNLGNTC…AAYILFYTSL (333 aa)) folds into the USP domain. Cys786 (nucleophile) is an active-site residue. The residue at position 945 (Thr945) is a Phosphothreonine. His1067 (proton acceptor) is an active-site residue.

Belongs to the peptidase C19 family. In terms of assembly, forms a ternary complex with RNF128 and OTUB1. Interacts (via C-terminal UCH catalytic domain) with OTUB1 isoform 1. Interacts with STAM2 (via SH3 domain). Interacts with DNAJB3, EGFR, EPS15, RASGRF1, RNF41, YWHAE, YWHAG and YWHAZ. Interacts with NBR1, RASGRF1, RNF41 and IST1. Associates with the ESCRT-0 complex and with microtubules. Interacts with BIRC6/bruce and KIF23/MKLP1. (Microbial infection) Interacts with Zika virus non-structural protein 1. Phosphorylation of Ser-718 is essential for interaction with YWHAE and for cytosol localization. Undergoes dephosphorylation at Ser-718 in the M phase. Tyrosine-phosphorylated in its N-terminal half in an EGFR-dependent manner. In terms of processing, ubiquitinated. Inactive form is mostly monoubiquitinated, but polyubiquitination happens too. Ubiquitination is increased in EGF-stimulated cells. Ubiquitination of active form is undetectable, suggesting a possibility that USP8 deubiquitinates itself, thereby regulating its own function.

It is found in the cytoplasm. It localises to the nucleus. Its subcellular location is the endosome membrane. The protein resides in the cell membrane. The enzyme catalyses Thiol-dependent hydrolysis of ester, thioester, amide, peptide and isopeptide bonds formed by the C-terminal Gly of ubiquitin (a 76-residue protein attached to proteins as an intracellular targeting signal).. Its function is as follows. Hydrolase that can remove conjugated ubiquitin from proteins and therefore plays an important regulatory role at the level of protein turnover by preventing degradation. Converts both 'Lys-48' an 'Lys-63'-linked ubiquitin chains. Catalytic activity is enhanced in the M phase. Involved in cell proliferation. Required to enter into S phase in response to serum stimulation. May regulate T-cell anergy mediated by RNF128 via the formation of a complex containing RNF128 and OTUB1. Probably regulates the stability of STAM2 and RASGRF1. Regulates endosomal ubiquitin dynamics, cargo sorting, membrane traffic at early endosomes, and maintenance of ESCRT-0 stability. The level of protein ubiquitination on endosomes is essential for maintaining the morphology of the organelle. Deubiquitinates EPS15 and controls tyrosine kinase stability. Removes conjugated ubiquitin from EGFR thus regulating EGFR degradation and downstream MAPK signaling. Involved in acrosome biogenesis through interaction with the spermatid ESCRT-0 complex and microtubules. Deubiquitinates BIRC6/bruce and KIF23/MKLP1. Deubiquitinates BACE1 which inhibits BACE1 lysosomal degradation and modulates BACE-mediated APP cleavage and amyloid-beta formation. This chain is Ubiquitin carboxyl-terminal hydrolase 8, found in Homo sapiens (Human).